Reading from the N-terminus, the 219-residue chain is EP300-interacting inhibitor of differentiation 2 (219 aa).

The segment at 1-71 (MSELPADQGV…PVPEAREGPM (71 aa)) is disordered. Over residues 20-34 (GDVRQAEVGGRRREP) the composition is skewed to basic and acidic residues. Arginine 75 bears the Omega-N-methylarginine mark. Positions 95-115 (AEPAEEEGPEGRPRSRPGNGP) are disordered.

In terms of assembly, heterodimer with EID2B. Interacts with the C-terminus of EP300. Interacts with HDAC1 and HDAC2. Interacts with SMAD2, SMAD4 and with the MH2 domain of SMAD3.

The protein localises to the nucleus. Its function is as follows. Interacts with EP300 and acts as a repressor of MYOD-dependent transcription and muscle differentiation. Inhibits EP300 histone acetyltransferase activity. Acts as a repressor of TGFB/SMAD transcriptional responses. May act as a repressor of the TGFB/SMAD3-dependent signaling by selectively blocking formation of TGFB-induced SMAD3-SMAD4 complex. This Bos taurus (Bovine) protein is EP300-interacting inhibitor of differentiation 2.